We begin with the raw amino-acid sequence, 246 residues long: Transmembrane and ubiquitin-like domain-containing protein 1 (246 aa).

The interval 2–30 is required to release iHOPS from membranes; it reads TLIEGVGDEVTVLFSVLACLLVLALAWVS. A helical membrane pass occupies residues 11 to 31; sequence VTVLFSVLACLLVLALAWVST. The disordered stretch occupies residues 34–101; sequence AEGGDPLPQP…TPPAPDSPQE (68 aa). The segment covering 40–50 has biased composition (pro residues); it reads LPQPSGTPTPS. Residue threonine 71 is modified to Phosphothreonine. Residue serine 73 is modified to Phosphoserine. Threonine 92 bears the Phosphothreonine mark. Serine 98 and serine 127 each carry phosphoserine. Residues 103-176 enclose the Ubiquitin-like domain; the sequence is LVLRLKFLND…LHCHVSTRVG (74 aa). Helical transmembrane passes span 195–215 and 221–241; these read IGSL…YCQI and FPLT…LLAF.

Interacts with EEF1A1, GRIA2, GRIP1, CAMLG, TUBG1. Interacts with NPM1 and CDKN2A; TMUB1 can enhance interaction between NPM1 and CDKN2A and is proposed to bridge the proteins; proposed to be mediated by iHOPS. Interacts with ERLIN2 and AMFR; TMUB1 promotes the interaction of ERLIN2 with AMFR. Processed by regulated intramembrane proteolysis (RIP)in the N-terminus to release iHOPS from membranes. Ubiquitously expressed with highest levels in mammary and thyroid glands, bone marrow and spleen; limited expression in cardiac, pancreatic and ovarian tissues.

The protein localises to the membrane. It is found in the postsynaptic cell membrane. The protein resides in the recycling endosome. Its subcellular location is the cytoplasm. It localises to the nucleus. The protein localises to the nucleolus. It is found in the cytoskeleton. The protein resides in the microtubule organizing center. Its subcellular location is the centrosome. Its function is as follows. Involved in sterol-regulated ubiquitination and degradation of HMG-CoA reductase HMGCR. Involved in positive regulation of AMPA-selective glutamate receptor GRIA2 recycling to the cell surface. Acts as a negative regulator of hepatocyte growth during regeneration. In terms of biological role, may contribute to the regulation of translation during cell-cycle progression. May contribute to the regulation of cell proliferation. May be involved in centrosome assembly. Modulates stabilization and nucleolar localization of tumor suppressor CDKN2A and enhances association between CDKN2A and NPM1. This Homo sapiens (Human) protein is Transmembrane and ubiquitin-like domain-containing protein 1 (TMUB1).